We begin with the raw amino-acid sequence, 505 residues long: N-succinylglutamate 5-semialdehyde dehydrogenase (505 aa).

234-239 (GSAHTG) lines the NAD(+) pocket. Residues glutamate 257 and cysteine 291 contribute to the active site.

This sequence belongs to the aldehyde dehydrogenase family. AstD subfamily.

It catalyses the reaction N-succinyl-L-glutamate 5-semialdehyde + NAD(+) + H2O = N-succinyl-L-glutamate + NADH + 2 H(+). It functions in the pathway amino-acid degradation; L-arginine degradation via AST pathway; L-glutamate and succinate from L-arginine: step 4/5. Catalyzes the NAD-dependent reduction of succinylglutamate semialdehyde into succinylglutamate. This is N-succinylglutamate 5-semialdehyde dehydrogenase from Yersinia pseudotuberculosis serotype IB (strain PB1/+).